The primary structure comprises 335 residues: uncharacterized protein (335 aa).

2 disordered regions span residues 152–179 and 252–271; these read IQLP…TVND and LDLF…SASL. Phosphoserine occurs at positions 257 and 260. Positions 257 to 271 are enriched in polar residues; it reads SPSSENKSTAGSASL.

This is an uncharacterized protein from Schizosaccharomyces pombe (strain 972 / ATCC 24843) (Fission yeast).